A 214-amino-acid chain; its full sequence is GTP-binding nuclear protein GSP1/Ran (214 aa).

In terms of domain architecture, Small GTPase Ran-type spans 4–168 (EVPTFKLVLV…LWLARKLAGN (165 aa)). Residue 15 to 22 (DGGTGKTT) coordinates GTP. The switch-I stretch occupies residues 34 to 42 (KKYIATIGV). Residues glycine 65, 119–122 (NKVD), and 147–149 (SAK) contribute to the GTP site. The tract at residues 65 to 81 (GQEKFGGLRDGYYINAQ) is switch-II.

It belongs to the small GTPase superfamily. Ran family. In terms of assembly, found in a nuclear export complex with RanGTP, exportin and pre-miRNA.

It is found in the nucleus. Its function is as follows. GTP-binding protein involved in nucleocytoplasmic transport. Required for the import of protein into the nucleus and also for RNA export. Involved in chromatin condensation and control of cell cycle. This chain is GTP-binding nuclear protein GSP1/Ran (GSP1), found in Candida glabrata (strain ATCC 2001 / BCRC 20586 / JCM 3761 / NBRC 0622 / NRRL Y-65 / CBS 138) (Yeast).